Reading from the N-terminus, the 438-residue chain is Transposon Ty2-F Gag polyprotein (438 aa).

Polar residues-rich tracts occupy residues 1–11, 19–39, and 49–60; these read MESQQLHQNPH, ASVT…SASN, and KVNSQQETTPGT. 3 disordered regions span residues 1–86, 366–397, and 419–438; these read MESQ…GQYQ, VSRT…AKAH, and SSQY…TERI. An RNA-binding region spans residues 295–397; sequence ENNINVSDRL…SSKPRAAKAH (103 aa). Low complexity predominate over residues 369-381; it reads TSPNTTNTKVTTR.

As to quaternary structure, homotrimer.

It is found in the cytoplasm. Capsid protein (CA) is the structural component of the virus-like particle (VLP), forming the shell that encapsulates the retrotransposons dimeric RNA genome. The particles are assembled from trimer-clustered units and there are holes in the capsid shells that allow for the diffusion of macromolecules. CA also has nucleocapsid-like chaperone activity, promoting primer tRNA(i)-Met annealing to the multipartite primer-binding site (PBS), dimerization of Ty2 RNA and initiation of reverse transcription. The polypeptide is Transposon Ty2-F Gag polyprotein (TY2A-F) (Saccharomyces cerevisiae (strain ATCC 204508 / S288c) (Baker's yeast)).